The chain runs to 455 residues: Protein king tubby (455 aa).

Residues 35-92 (RPMSGMRGNSRELHAYDGPMQFIGSPHNPDQILSNNSSSVHLSSSMNSSRNNSNNLRS) are disordered. Residues 67–92 (LSNNSSSVHLSSSMNSSRNNSNNLRS) are compositionally biased toward low complexity. Phosphoserine is present on Ser144.

Belongs to the TUB family.

It is found in the cytoplasm. The protein localises to the nucleus. Its subcellular location is the cell projection. It localises to the cilium membrane. The protein resides in the rhabdomere. The protein is Protein king tubby of Drosophila virilis (Fruit fly).